The primary structure comprises 670 residues: MAAPCVRLGSVRCTGTLLRYFCGSARHRAAAASHEEIDIPRRKSWDKTAVLQALAYTVSHDPTAAHYMFQDEPFLAPKTSSEFRLYSLSKESGRNAAKYIIGTYPNLFQNDVAEPHIPCLMPENLQPQVEGVSEEALKERIQLRRVKESVDLFDQLLQGGTAPSLETTNKLLDLISFYGDREPVRDIQTSEQEQQEVQDQQETEDPKKRPRQYRKASEILGSWRENNNAERIFNLMPERNAHSFCTLIQGMAKFGSSSKAFNIYTDLMNNRLTADVQTFNALILAAPDIKEKYNEKWDLIVELLKHMVQQNVRPNLLTFNSVLKSLRKCGPMAKGLALQTINEMKALNIEPSLATYNHLLGVFYKGALSPRGQTEILSEVLDEIEGRSFTLRDPDDVYFFTNAMRVCLDLKDIELAYRLHTLQQTADNRGLMGDFYLQSTYYGRFFNLLCMMESIDIILKWYRELIPSLYYPNSRGMLDLLQALDMDNRLDLIPQIWKDIKQIGHSNKVELVEEVLNLMARDIQPPELQAAFGDTALDIKSLYEVKDRVRVALEWSAGSLGNVSALLARAGKTVEAWKMLQLFKKSHRVPSTEVLDEFLSRAKVDANTNLAISLVQLAVGFCLPNTAKLAQRVMEEFTVSEEQRLTLEDLQKSHSSSSSSSSSSSDSDRE.

The transit peptide at 1–13 (MAAPCVRLGSVRC) directs the protein to the mitochondrion. PPR repeat units lie at residues 129–163 (VEGVSEEALKERIQLRRVKESVDLFDQLLQGGTAP), 164–199 (SLETTNKLLDLISFYGDREPVRDIQTSEQEQQEVQD), 209–239 (RPRQYRKASEILGSWRENNNAERIFNLMPER), 240–274 (NAHSFCTLIQGMAKFGSSSKAFNIYTDLMNNRLTA), 275–314 (DVQTFNALILAAPDIKEKYNEKWDLIVELLKHMVQQNVRP), 315–351 (NLLTFNSVLKSLRKCGPMAKGLALQTINEMKALNIEP), 352–392 (SLAT…FTLR), 396–430 (DVYFFTNAMRVCLDLKDIELAYRLHTLQQTADNRG), 438–472 (QSTYYGRFFNLLCMMESIDIILKWYRELIPSLYYP), 473–507 (NSRGMLDLLQALDMDNRLDLIPQIWKDIKQIGHSN), and 556–590 (SAGSLGNVSALLARAGKTVEAWKMLQLFKKSHRVP). The disordered stretch occupies residues 187–213 (IQTSEQEQQEVQDQQETEDPKKRPRQY). Over residues 193–203 (EQQEVQDQQET) the composition is skewed to acidic residues. Positions 648–670 (EDLQKSHSSSSSSSSSSSDSDRE) are disordered. Low complexity predominate over residues 653–670 (SHSSSSSSSSSSSDSDRE).

This sequence belongs to the mitochondrion-specific ribosomal protein mS39 family.

Its subcellular location is the mitochondrion. Mitochondrial protein that may have a role in mitochondrial translation. This Xenopus tropicalis (Western clawed frog) protein is Small ribosomal subunit protein mS39 (ptcd3).